The primary structure comprises 446 residues: Exodeoxyribonuclease 7 large subunit (446 aa).

Belongs to the XseA family. Heterooligomer composed of large and small subunits.

It is found in the cytoplasm. The catalysed reaction is Exonucleolytic cleavage in either 5'- to 3'- or 3'- to 5'-direction to yield nucleoside 5'-phosphates.. Its function is as follows. Bidirectionally degrades single-stranded DNA into large acid-insoluble oligonucleotides, which are then degraded further into small acid-soluble oligonucleotides. The polypeptide is Exodeoxyribonuclease 7 large subunit (Streptococcus pneumoniae (strain Taiwan19F-14)).